We begin with the raw amino-acid sequence, 248 residues long: 2,3-bisphosphoglycerate-dependent phosphoglycerate mutase (248 aa).

Substrate is bound by residues 8–15 (RHGESVWN), 21–22 (TG), arginine 60, 87–90 (ERHY), lysine 98, 114–115 (RR), and 183–184 (GN). Histidine 9 acts as the Tele-phosphohistidine intermediate in catalysis. Glutamate 87 functions as the Proton donor/acceptor in the catalytic mechanism.

The protein belongs to the phosphoglycerate mutase family. BPG-dependent PGAM subfamily.

It catalyses the reaction (2R)-2-phosphoglycerate = (2R)-3-phosphoglycerate. It functions in the pathway carbohydrate degradation; glycolysis; pyruvate from D-glyceraldehyde 3-phosphate: step 3/5. Functionally, catalyzes the interconversion of 2-phosphoglycerate and 3-phosphoglycerate. The chain is 2,3-bisphosphoglycerate-dependent phosphoglycerate mutase from Brachyspira hyodysenteriae (strain ATCC 49526 / WA1).